We begin with the raw amino-acid sequence, 110 residues long: MNDILTQLGKVLEERKLADPDSSYVASLHAKGLNKILEKVGEECTETILAAKDAEQDGSTHNVIYETADLWFHSLVMLSHLNIAPQEIMQELARRFDISGLEEKASRGKK.

This sequence belongs to the PRA-PH family.

Its subcellular location is the cytoplasm. It carries out the reaction 1-(5-phospho-beta-D-ribosyl)-ATP + H2O = 1-(5-phospho-beta-D-ribosyl)-5'-AMP + diphosphate + H(+). It participates in amino-acid biosynthesis; L-histidine biosynthesis; L-histidine from 5-phospho-alpha-D-ribose 1-diphosphate: step 2/9. This Hahella chejuensis (strain KCTC 2396) protein is Phosphoribosyl-ATP pyrophosphatase.